Consider the following 370-residue polypeptide: UDP-N-acetylglucosamine--N-acetylmuramyl-(pentapeptide) pyrophosphoryl-undecaprenol N-acetylglucosamine transferase (370 aa).

UDP-N-acetyl-alpha-D-glucosamine is bound by residues 15–17, Asn-126, Arg-169, Ser-197, and Gln-299; that span reads TGG.

The protein belongs to the glycosyltransferase 28 family. MurG subfamily.

Its subcellular location is the cell inner membrane. The catalysed reaction is di-trans,octa-cis-undecaprenyl diphospho-N-acetyl-alpha-D-muramoyl-L-alanyl-D-glutamyl-meso-2,6-diaminopimeloyl-D-alanyl-D-alanine + UDP-N-acetyl-alpha-D-glucosamine = di-trans,octa-cis-undecaprenyl diphospho-[N-acetyl-alpha-D-glucosaminyl-(1-&gt;4)]-N-acetyl-alpha-D-muramoyl-L-alanyl-D-glutamyl-meso-2,6-diaminopimeloyl-D-alanyl-D-alanine + UDP + H(+). The protein operates within cell wall biogenesis; peptidoglycan biosynthesis. In terms of biological role, cell wall formation. Catalyzes the transfer of a GlcNAc subunit on undecaprenyl-pyrophosphoryl-MurNAc-pentapeptide (lipid intermediate I) to form undecaprenyl-pyrophosphoryl-MurNAc-(pentapeptide)GlcNAc (lipid intermediate II). In Methylorubrum populi (strain ATCC BAA-705 / NCIMB 13946 / BJ001) (Methylobacterium populi), this protein is UDP-N-acetylglucosamine--N-acetylmuramyl-(pentapeptide) pyrophosphoryl-undecaprenol N-acetylglucosamine transferase.